We begin with the raw amino-acid sequence, 284 residues long: Tryptophan synthase alpha chain (284 aa).

Catalysis depends on proton acceptor residues Glu59 and Asp70.

Belongs to the TrpA family. Tetramer of two alpha and two beta chains.

The enzyme catalyses (1S,2R)-1-C-(indol-3-yl)glycerol 3-phosphate + L-serine = D-glyceraldehyde 3-phosphate + L-tryptophan + H2O. Its pathway is amino-acid biosynthesis; L-tryptophan biosynthesis; L-tryptophan from chorismate: step 5/5. In terms of biological role, the alpha subunit is responsible for the aldol cleavage of indoleglycerol phosphate to indole and glyceraldehyde 3-phosphate. This is Tryptophan synthase alpha chain from Azospirillum brasilense.